We begin with the raw amino-acid sequence, 256 residues long: 4-hydroxy-tetrahydrodipicolinate reductase (256 aa).

Position 8-13 (glycine 8–valine 13) interacts with NAD(+). An NADP(+)-binding site is contributed by lysine 36. Residues glycine 89 to threonine 91 and alanine 113 to methionine 116 each bind NAD(+). Residue histidine 145 is the Proton donor/acceptor of the active site. Histidine 146 lines the (S)-2,3,4,5-tetrahydrodipicolinate pocket. Residue lysine 149 is the Proton donor of the active site. Glycine 155–threonine 156 contributes to the (S)-2,3,4,5-tetrahydrodipicolinate binding site.

The protein belongs to the DapB family.

It is found in the cytoplasm. It carries out the reaction (S)-2,3,4,5-tetrahydrodipicolinate + NAD(+) + H2O = (2S,4S)-4-hydroxy-2,3,4,5-tetrahydrodipicolinate + NADH + H(+). The enzyme catalyses (S)-2,3,4,5-tetrahydrodipicolinate + NADP(+) + H2O = (2S,4S)-4-hydroxy-2,3,4,5-tetrahydrodipicolinate + NADPH + H(+). The protein operates within amino-acid biosynthesis; L-lysine biosynthesis via DAP pathway; (S)-tetrahydrodipicolinate from L-aspartate: step 4/4. Functionally, catalyzes the conversion of 4-hydroxy-tetrahydrodipicolinate (HTPA) to tetrahydrodipicolinate. This Wolinella succinogenes (strain ATCC 29543 / DSM 1740 / CCUG 13145 / JCM 31913 / LMG 7466 / NCTC 11488 / FDC 602W) (Vibrio succinogenes) protein is 4-hydroxy-tetrahydrodipicolinate reductase.